Here is a 220-residue protein sequence, read N- to C-terminus: Ribose-5-phosphate isomerase A (220 aa).

Residues 25-28, 80-83, and 93-96 contribute to the substrate site; these read TGST, DGAD, and KGGG. Glutamate 102 functions as the Proton acceptor in the catalytic mechanism. Lysine 120 is a substrate binding site.

It belongs to the ribose 5-phosphate isomerase family. As to quaternary structure, homodimer.

The catalysed reaction is aldehydo-D-ribose 5-phosphate = D-ribulose 5-phosphate. The protein operates within carbohydrate degradation; pentose phosphate pathway; D-ribose 5-phosphate from D-ribulose 5-phosphate (non-oxidative stage): step 1/1. In terms of biological role, catalyzes the reversible conversion of ribose-5-phosphate to ribulose 5-phosphate. This chain is Ribose-5-phosphate isomerase A, found in Bacillus cereus (strain ZK / E33L).